Reading from the N-terminus, the 858-residue chain is Heat shock protein 105 kDa (858 aa).

Residue S2 is modified to N-acetylserine. K471 carries the post-translational modification N6-acetyllysine. Disordered regions lie at residues 500-585 (KVPT…PPEA) and 801-858 (VTQP…MDLD). The segment covering 504–515 (EEEDGSSVEADM) has biased composition (acidic residues). S509 and S510 each carry phosphoserine. Residues 533-555 (QQDNSEAGTQPQVQTDGQQTSQS) are compositionally biased toward polar residues. Residue S558 is modified to Phosphoserine. T562 is subject to Phosphothreonine. 2 stretches are compositionally biased toward basic and acidic residues: residues 564 to 585 (EENKIPDADKANEKKVDQPPEA) and 806 to 815 (PKIESPKLER). Position 810 is a phosphoserine (S810). T816 is subject to Phosphothreonine.

Belongs to the heat shock protein 70 family. Interacts with HSPA8/HSC70. Interacts with HSPA1A (via NBD) and HSPA1B (via NBD). In terms of processing, phosphorylation on Ser-509 may be important for regulation of the HSPA8/HSC70 chaperone activity.

Its subcellular location is the cytoplasm. Its function is as follows. Acts as a nucleotide-exchange factor (NEF) for chaperone proteins HSPA1A and HSPA1B, promoting the release of ADP from HSPA1A/B thereby triggering substrate release. Prevents the aggregation of denatured proteins in cells under severe stress, on which the ATP levels decrease markedly. Inhibits HSPA8/HSC70 ATPase and chaperone activities. This is Heat shock protein 105 kDa (Hsph1) from Rattus norvegicus (Rat).